We begin with the raw amino-acid sequence, 60 residues long: Large ribosomal subunit protein bL32 (60 aa).

The tract at residues 1 to 60 is disordered; the sequence is MAVQQNKKSRSARDMRRSHDALESNALSVEKSTGEVHLRHHVSPDGFYRGRKVVDKGSDE. The segment covering 11–22 has biased composition (basic and acidic residues); it reads SARDMRRSHDAL.

This sequence belongs to the bacterial ribosomal protein bL32 family.

The protein is Large ribosomal subunit protein bL32 of Pseudomonas aeruginosa (strain LESB58).